The chain runs to 216 residues: Probable GTP-binding protein EngB (216 aa).

The EngB-type G domain maps to 27–201 (EGIEVAFAGR…REKLDTWFSE (175 aa)). Residues 35–42 (GRSNAGKS), 62–66 (GRTQL), 80–83 (DLPG), 147–150 (TKAD), and 180–182 (FSS) contribute to the GTP site. Residues Ser42 and Thr64 each contribute to the Mg(2+) site.

It belongs to the TRAFAC class TrmE-Era-EngA-EngB-Septin-like GTPase superfamily. EngB GTPase family. Mg(2+) is required as a cofactor.

Its function is as follows. Necessary for normal cell division and for the maintenance of normal septation. This is Probable GTP-binding protein EngB from Yersinia pseudotuberculosis serotype O:1b (strain IP 31758).